Here is a 203-residue protein sequence, read N- to C-terminus: Outer-membrane lipoprotein carrier protein (203 aa).

Positions 1 to 21 (MKKMAIACALLSSVVASSVWA) are cleaved as a signal peptide. The tract at residues 178–203 (QQNGAVEPSKFTFTPPQGVTIDDQRK) is disordered.

The protein belongs to the LolA family. Monomer.

It is found in the periplasm. In terms of biological role, participates in the translocation of lipoproteins from the inner membrane to the outer membrane. Only forms a complex with a lipoprotein if the residue after the N-terminal Cys is not an aspartate (The Asp acts as a targeting signal to indicate that the lipoprotein should stay in the inner membrane). The polypeptide is Outer-membrane lipoprotein carrier protein (Salmonella typhi).